A 229-amino-acid polypeptide reads, in one-letter code: 2-C-methyl-D-erythritol 4-phosphate cytidylyltransferase (229 aa).

It belongs to the IspD/TarI cytidylyltransferase family. IspD subfamily.

The catalysed reaction is 2-C-methyl-D-erythritol 4-phosphate + CTP + H(+) = 4-CDP-2-C-methyl-D-erythritol + diphosphate. It functions in the pathway isoprenoid biosynthesis; isopentenyl diphosphate biosynthesis via DXP pathway; isopentenyl diphosphate from 1-deoxy-D-xylulose 5-phosphate: step 2/6. Functionally, catalyzes the formation of 4-diphosphocytidyl-2-C-methyl-D-erythritol from CTP and 2-C-methyl-D-erythritol 4-phosphate (MEP). This chain is 2-C-methyl-D-erythritol 4-phosphate cytidylyltransferase, found in Clostridium botulinum (strain Loch Maree / Type A3).